An 895-amino-acid polypeptide reads, in one-letter code: DNA double-strand break repair Rad50 ATPase (895 aa).

Residues 32–38 (NGAGKSS) and Gln137 each bind ATP. Residues 183–253 (SDYDYLKNEL…LNAQLETIKK (71 aa)) are a coiled coil. Residues 411 to 507 (RAEINSSLMQ…ERKHQKKLLD (97 aa)) enclose the Zinc-hook domain. Zn(2+) is bound by residues Cys455 and Cys458. 2 coiled-coil regions span residues 464-510 (TEKS…DRIN) and 618-647 (ENSL…AMDE).

Belongs to the SMC family. RAD50 subfamily. As to quaternary structure, homodimer. Forms a heterotetramer composed of two Mre11 subunits and two Rad50 subunits. Zn(2+) is required as a cofactor.

Part of the Rad50/Mre11 complex, which is involved in the early steps of DNA double-strand break (DSB) repair. The complex may facilitate opening of the processed DNA ends to aid in the recruitment of HerA and NurA. Rad50 controls the balance between DNA end bridging and DNA resection via ATP-dependent structural rearrangements of the Rad50/Mre11 complex. This is DNA double-strand break repair Rad50 ATPase from Thermoplasma volcanium (strain ATCC 51530 / DSM 4299 / JCM 9571 / NBRC 15438 / GSS1).